Here is a 303-residue protein sequence, read N- to C-terminus: Coenzyme PQQ synthesis protein B (303 aa).

This sequence belongs to the PqqB family.

It functions in the pathway cofactor biosynthesis; pyrroloquinoline quinone biosynthesis. In terms of biological role, may be involved in the transport of PQQ or its precursor to the periplasm. The sequence is that of Coenzyme PQQ synthesis protein B from Pseudomonas putida (strain GB-1).